We begin with the raw amino-acid sequence, 749 residues long: MPCNCFKSNVHVQEYKDLLVFGYASTIFPNDYQSEHIAEERHTVPCLGDPENRVDRYDCRLLLPSIDVAIKRNGSPSEQCPTEAMEEDMCEEERYLDMYKDIQREQEKEEEEKRRNDQRNAIGFDYGTGKVKARESDSEDEPFEPPEGIKFPVGLELPSNMKLHHIIEKTASFIVANGTQMEIVIKAKQRNNAEQFGFLEFDHRLNPFYKYLQKLIREKKYIPDLNKRPKKLTKTSRASTSKPAISSSLAAIAAAHGSDSEDSDSDYELHPSLLSGGAKRPVTPEKPGAIGPRKKPVEPEKPPDFTLKPVGDISQRNDVYAALFKNLAHVTRQAAGVEEVKMNVEEAKKEKENDHLDDPEYREWYENFYGRPCPWIGPRPMIPATPDLEPILNSYAEHVAQRGLEAEASLAAREDLQLHFMEPKSPYYSYYHHKVRMHQWRMYQPIEQNLSPLVLNSPAPPSAVSSPGPSSLMSLNLSTPEPPLNRRQRRRLLDSSRLDESITEPGVIDPITMLQIPKSVSTPANLDILKTPISFSLRNDEPRDESSFRFDPDLDETAGPSDTTANFSDISGLFPPPTPPVIPPSTQMQVDRKEKARIFMEKLLQEKKAKKLQEEEERSKLEEETRKKAEKISESLSERKNTGRSDRREEAPKGARSLDEIINNRINSLLSESGFEPVEEMKRTDEDRERKRHRKRSRSRRRSRSCSPRDRSREHKKSRKSGRHHRSRSRSSSRDRHRRNRSRSRDRRR.

The segment at 8–124 (SNVHVQEYKD…RNDQRNAIGF (117 aa)) is dry CEEERYL. Positions 105-118 (EQEKEEEEKRRNDQ) are enriched in basic and acidic residues. Residues 105-149 (EQEKEEEEKRRNDQRNAIGFDYGTGKVKARESDSEDEPFEPPEGI) form a disordered region. The SURP motif 1 repeat unit spans residues 166-209 (IIEKTASFIVANGTQMEIVIKAKQRNNAEQFGFLEFDHRLNPFY). The interval 256 to 310 (HGSDSEDSDSDYELHPSLLSGGAKRPVTPEKPGAIGPRKKPVEPEKPPDFTLKPV) is disordered. The SURP motif 2 repeat unit spans residues 391-431 (ILNSYAEHVAQRGLEAEASLAAREDLQLHFMEPKSPYYSYY). The segment covering 458-478 (PAPPSAVSSPGPSSLMSLNLS) has biased composition (low complexity). Disordered stretches follow at residues 458–498 (PAPP…SSRL), 537–592 (LRND…QVDR), and 608–749 (KAKK…DRRR). Residues 538-552 (RNDEPRDESSFRFDP) show a composition bias toward basic and acidic residues. Polar residues predominate over residues 560–569 (PSDTTANFSD). The segment covering 574-583 (FPPPTPPVIP) has biased composition (pro residues). Basic and acidic residues-rich tracts occupy residues 608 to 659 (KAKK…RSLD) and 679 to 689 (EEMKRTDEDRE). Basic residues-rich tracts occupy residues 690–704 (RKRH…RRSR) and 714–749 (EHKK…DRRR).

Its function is as follows. It is a regulator of pre-mRNA splicing (and, possibly, of other RNA processing events). It may regulate its own expression at the level of RNA processing. This is Protein SWAP (swp-1) from Caenorhabditis elegans.